The following is a 178-amino-acid chain: Large ribosomal subunit protein bL17 (178 aa).

Belongs to the bacterial ribosomal protein bL17 family. In terms of assembly, part of the 50S ribosomal subunit. Contacts protein L32.

This Lachnospira eligens (strain ATCC 27750 / DSM 3376 / VPI C15-48 / C15-B4) (Eubacterium eligens) protein is Large ribosomal subunit protein bL17.